The sequence spans 326 residues: Acetyl-coenzyme A carboxylase carboxyl transferase subunit alpha (326 aa).

The region spanning 44–298 (QLESRAEQLR…KEALLFHLNT (255 aa)) is the CoA carboxyltransferase C-terminal domain.

Belongs to the AccA family. As to quaternary structure, acetyl-CoA carboxylase is a heterohexamer composed of biotin carboxyl carrier protein (AccB), biotin carboxylase (AccC) and two subunits each of ACCase subunit alpha (AccA) and ACCase subunit beta (AccD).

It is found in the cytoplasm. The catalysed reaction is N(6)-carboxybiotinyl-L-lysyl-[protein] + acetyl-CoA = N(6)-biotinyl-L-lysyl-[protein] + malonyl-CoA. The protein operates within lipid metabolism; malonyl-CoA biosynthesis; malonyl-CoA from acetyl-CoA: step 1/1. Functionally, component of the acetyl coenzyme A carboxylase (ACC) complex. First, biotin carboxylase catalyzes the carboxylation of biotin on its carrier protein (BCCP) and then the CO(2) group is transferred by the carboxyltransferase to acetyl-CoA to form malonyl-CoA. The chain is Acetyl-coenzyme A carboxylase carboxyl transferase subunit alpha from Synechocystis sp. (strain ATCC 27184 / PCC 6803 / Kazusa).